The following is a 173-amino-acid chain: Calcium-binding protein 5 (173 aa).

EF-hand domains are found at residues 28–63 (DEIE…MGYM), 82–99 (GRVD…KLLA), 105–140 (IGVQ…LLGE), and 142–173 (LTPR…MMSR). Asp41, Asp43, Asp45, and Asp52 together coordinate Ca(2+). The Ca(2+) site is built by Asp118, Asn120, Asp122, Glu124, Glu129, Asp155, Asn157, Asp159, Thr161, and Glu166.

As to quaternary structure, interacts with CACNA1C (via C-terminal CDB motif) in a calcium-dependent manner. Interacts with STXBP1. Interacts with MYO6. In terms of tissue distribution, retina.

It is found in the cytoplasm. In terms of biological role, inhibits calcium-dependent inactivation of L-type calcium channel and shifts voltage dependence of activation to more depolarized membrane potentials. Involved in the transmission of light signals. May positively regulate neurotransmitter vesicle endocytosis and exocytosis in a salt-dependent manner. May play a role in the extension and network organization of neurites. The sequence is that of Calcium-binding protein 5 (CABP5) from Homo sapiens (Human).